We begin with the raw amino-acid sequence, 82 residues long: Chaperone protein DnaJ 1 (82 aa).

The segment at 1-33 (YHLGGPPVTLKLPPGTPAGRTMRARGKGAVRKD) is disordered.

This sequence belongs to the DnaJ family. In terms of assembly, homodimer. Requires Zn(2+) as cofactor.

Its subcellular location is the cytoplasm. Its function is as follows. Participates actively in the response to hyperosmotic and heat shock by preventing the aggregation of stress-denatured proteins and by disaggregating proteins, also in an autonomous, DnaK-independent fashion. Unfolded proteins bind initially to DnaJ; upon interaction with the DnaJ-bound protein, DnaK hydrolyzes its bound ATP, resulting in the formation of a stable complex. GrpE releases ADP from DnaK; ATP binding to DnaK triggers the release of the substrate protein, thus completing the reaction cycle. Several rounds of ATP-dependent interactions between DnaJ, DnaK and GrpE are required for fully efficient folding. Also involved, together with DnaK and GrpE, in the DNA replication of plasmids through activation of initiation proteins. This chain is Chaperone protein DnaJ 1 (dnaJ1), found in Streptomyces albus G.